An 808-amino-acid chain; its full sequence is Transcription activator of gluconeogenesis PAAG_01030 (808 aa).

The tract at residues M1–R90 is disordered. Residues S69–K83 show a composition bias toward low complexity. The zn(2)-C6 fungal-type DNA-binding region spans C97 to C125. Polar residues predominate over residues A158–R170. Disordered regions lie at residues A158–P203, S236–T285, G322–Q387, P442–S461, and T598–S629. The span at N171–N188 shows a compositional bias: low complexity. Composition is skewed to polar residues over residues K189–P203, F248–P279, G339–P359, and G377–Q387. 2 stretches are compositionally biased toward low complexity: residues P442–Q451 and T598–S619. The span at A620–S629 shows a compositional bias: polar residues.

This sequence belongs to the ERT1/acuK family.

Its subcellular location is the nucleus. Its function is as follows. Transcription factor which regulates nonfermentable carbon utilization. Activator of gluconeogenetic genes. This Paracoccidioides lutzii (strain ATCC MYA-826 / Pb01) (Paracoccidioides brasiliensis) protein is Transcription activator of gluconeogenesis PAAG_01030.